The following is a 158-amino-acid chain: Transcriptional repressor NrdR (158 aa).

The segment at C3–C34 is a zinc-finger region. The ATP-cone domain maps to P49–E139.

This sequence belongs to the NrdR family. Requires Zn(2+) as cofactor.

Its function is as follows. Negatively regulates transcription of bacterial ribonucleotide reductase nrd genes and operons by binding to NrdR-boxes. The polypeptide is Transcriptional repressor NrdR (Bordetella petrii (strain ATCC BAA-461 / DSM 12804 / CCUG 43448)).